A 469-amino-acid chain; its full sequence is 3-isopropylmalate dehydratase large subunit (469 aa).

Residues cysteine 347, cysteine 408, and cysteine 411 each contribute to the [4Fe-4S] cluster site.

The protein belongs to the aconitase/IPM isomerase family. LeuC type 1 subfamily. As to quaternary structure, heterodimer of LeuC and LeuD. Requires [4Fe-4S] cluster as cofactor.

The enzyme catalyses (2R,3S)-3-isopropylmalate = (2S)-2-isopropylmalate. It participates in amino-acid biosynthesis; L-leucine biosynthesis; L-leucine from 3-methyl-2-oxobutanoate: step 2/4. Functionally, catalyzes the isomerization between 2-isopropylmalate and 3-isopropylmalate, via the formation of 2-isopropylmaleate. The chain is 3-isopropylmalate dehydratase large subunit from Actinobacillus pleuropneumoniae serotype 3 (strain JL03).